Consider the following 507-residue polypeptide: Transcription factor SOX-9 (507 aa).

Disordered regions lie at residues 1–67 and 160–250; these read MNLL…SEED and RLRV…AGKV. Residues 30 to 41 show a composition bias toward low complexity; sequence SAGSPCPSGSGS. The span at 42-52 shows a compositional bias: polar residues; that stretch reads DTENTRPQENT. Composition is skewed to basic and acidic residues over residues 56–67 and 160–174; these read GEPDLKKESEED and RLRV…DYKY. A dimerization (DIM) region spans residues 63–103; that stretch reads ESEEDKFPVCIREAVSQVLKGYDWTLVPMPVRVNGSSKNKP. The tract at residues 63 to 103 is PQA; that stretch reads ESEEDKFPVCIREAVSQVLKGYDWTLVPMPVRVNGSSKNKP. Residue S64 is modified to Phosphoserine. The segment at residues 105–173 is a DNA-binding region (HMG box); that stretch reads VKRPMNAFMV…QHKKDHPDYK (69 aa). S211 bears the Phosphoserine mark. The transactivation domain (TAM) stretch occupies residues 224 to 307; that stretch reads PGEHSGQSQG…LPPNGHPGVP (84 aa). 2 consecutive short sequence motifs (9aaTAD) follow at residues 275–284 and 290–298; these read IGELSSDVIS and DVNEFDQYL. The interval 335–429 is disordered; it reads WMSKQQAPPP…PFNLPHYNPS (95 aa). Over residues 341–369 the composition is skewed to pro residues; it reads APPPPPQQPPQAPQAPQAPPQQQAPPQPQ. Residues 378 to 420 show a composition bias toward polar residues; that stretch reads HTLTTLSSEPGQSQRTHIKTEQLSPSHYSEQQQHSPQQISYSP. The segment at 392–507 is transactivation domain (TAC); it reads RTHIKTEQLS…QPVYTQLTRP (116 aa). A Glycyl lysine isopeptide (Lys-Gly) (interchain with G-Cter in ubiquitin) cross-link involves residue K396. The 9aaTAD 3 signature appears at 458 to 466; it reads SGLYSTFTY. The disordered stretch occupies residues 477–507; that stretch reads PIADTSGVPSIPQTHSPQHWEQPVYTQLTRP. A compositionally biased stretch (polar residues) spans 483–507; sequence GVPSIPQTHSPQHWEQPVYTQLTRP.

In terms of assembly, homodimer; homodimerization is required for activity. Interacts (via C-terminus) with ZNF219; forming a complex that binds to the COL2A1 promoter and activates COL2A1 expression. Interacts with DDRGK1. Interacts with EP300/p300. Interacts with beta-catenin (CTNNB1); inhibiting CTNNB1 activity by competing with the binding sites of TCF/LEF within CTNNB1. Acetylated; acetylation impairs nuclear localization and ability to transactivate expression of target genes. Deacetylated by SIRT1. In terms of processing, phosphorylation at Ser-64 and Ser-211 by PKA increases transcriptional activity and may help delay chondrocyte maturation downstream of PTHLH/PTHrP signaling. Phosphorylation at either Ser-64 or Ser-211 is required for sumoylation, but phosphorylation is not dependent on sumoylation. Phosphorylated on tyrosine residues; tyrosine dephosphorylation by PTPN11/SHP2 blocks SOX9 phosphorylation by PKA and subsequent SUMOylation. Post-translationally, sumoylated; phosphorylation at either Ser-64 or Ser-211 is required for sumoylation. Sumoylation is induced by BMP signaling pathway. Ubiquitinated; ubiquitination leads to proteasomal degradation and is negatively regulated by DDRGK1.

It localises to the nucleus. Its function is as follows. Transcription factor that plays a key role in chondrocytes differentiation and skeletal development. Specifically binds the 5'-ACAAAG-3' DNA motif present in enhancers and super-enhancers and promotes expression of genes important for chondrogenesis, including cartilage matrix protein-coding genes COL2A1, COL4A2, COL9A1, COL11A2 and ACAN, SOX5 and SOX6. Also binds to some promoter regions. Plays a central role in successive steps of chondrocyte differentiation. Absolutely required for precartilaginous condensation, the first step in chondrogenesis during which skeletal progenitors differentiate into prechondrocytes. Together with SOX5 and SOX6, required for overt chondrogenesis when condensed prechondrocytes differentiate into early stage chondrocytes, the second step in chondrogenesis. Later, required to direct hypertrophic maturation and block osteoblast differentiation of growth plate chondrocytes: maintains chondrocyte columnar proliferation, delays prehypertrophy and then prevents osteoblastic differentiation of chondrocytes by lowering beta-catenin (CTNNB1) signaling and RUNX2 expression. Also required for chondrocyte hypertrophy, both indirectly, by keeping the lineage fate of chondrocytes, and directly, by remaining present in upper hypertrophic cells and transactivating COL10A1 along with MEF2C. Low lipid levels are the main nutritional determinant for chondrogenic commitment of skeletal progenitor cells: when lipids levels are low, FOXO (FOXO1 and FOXO3) transcription factors promote expression of SOX9, which induces chondrogenic commitment and suppresses fatty acid oxidation. Mechanistically, helps, but is not required, to remove epigenetic signatures of transcriptional repression and deposit active promoter and enhancer marks at chondrocyte-specific genes. Acts in cooperation with the Hedgehog pathway-dependent GLI (GLI1 and GLI3) transcription factors. In addition to cartilage development, also acts as a regulator of proliferation and differentiation in epithelial stem/progenitor cells: involved in the lung epithelium during branching morphogenesis, by balancing proliferation and differentiation and regulating the extracellular matrix. Controls epithelial branching during kidney development. This is Transcription factor SOX-9 from Rattus norvegicus (Rat).